Reading from the N-terminus, the 1377-residue chain is Temperature-sensitive hemagglutinin tsh autotransporter (1377 aa).

The first 52 residues, 1–52, serve as a signal peptide directing secretion; that stretch reads MNRIYSLRYSAVARGFIAVSEFARKCVHKSVRRLCFPVLLLIPVLFSAGSLA. Residues 53–302 form the Peptidase S6 domain; it reads GTVNNELGYQ…AVIPLDFIGQ (250 aa). Catalysis depends on charge relay system residues His125, Asp153, and Ser259. The Autotransporter domain maps to 1111-1377; that stretch reads DINGEAGTWV…AINANIRYSF (267 aa).

In terms of processing, the C-terminus is blocked. Post-translationally, cleaved to release the mature protein from the outer membrane.

The protein resides in the periplasm. Its subcellular location is the secreted. It localises to the cell surface. The protein localises to the cell outer membrane. In terms of biological role, contributes to the development of lesions and deposition of fibrin in the avian air sacs. It can act both as an adhesin and as a serine protease. Agglutinates erythrocytes while in contact with the extracellular surface of the bacterial cells. Can adhere to purified hemoglobin and bind with great efficiency to extracellular matrix proteins. Cleaves casein and exhibits mucinolytic activity. The polypeptide is Temperature-sensitive hemagglutinin tsh autotransporter (tsh) (Escherichia coli).